We begin with the raw amino-acid sequence, 1138 residues long: 2'-5'-oligoadenylate synthase 3 (1138 aa).

An N-acetylmethionine modification is found at methionine 1. The interval 6-341 (TPAGALDKLV…GVLVQPWEGP (336 aa)) is OAS domain 1. Interaction with dsRNA regions lie at residues 12–56 (DKLV…VIRI) and 185–199 (EPRK…AKLK). The interval 342–462 (GLPRAGILDL…GSRMSPDLSQ (121 aa)) is linker. Residues 370-379 (LAVQSKERSQ) show a composition bias toward basic and acidic residues. Disordered stretches follow at residues 370–403 (LAVQ…NPSA) and 434–459 (TQST…MSPD). The span at 447-459 (SSISTAGSRMSPD) shows a compositional bias: polar residues. OAS domain regions lie at residues 463–793 (IPSK…PWDV) and 801–1135 (TLAE…WPVK). Residue serine 855 coordinates ATP. Mg(2+) is bound by residues aspartate 867, aspartate 869, and aspartate 939. Positions 998, 1001, and 1020 each coordinate ATP.

It belongs to the 2-5A synthase family. As to quaternary structure, monomer. Mg(2+) serves as cofactor. In terms of tissue distribution, intestine.

The protein localises to the cytoplasm. Its subcellular location is the nucleus. It carries out the reaction 3 ATP = 5'-triphosphoadenylyl-(2'-&gt;5')-adenylyl-(2'-&gt;5')-adenosine + 2 diphosphate. Its activity is regulated as follows. Produced as a latent enzyme which is activated by dsRNA generated during the course of viral infection. Strongly activated by long dsRNAs at least 50 nucleotides in length. ssRNA does not activate the enzyme. In terms of biological role, interferon-induced, dsRNA-activated antiviral enzyme which plays a critical role in cellular innate antiviral response. In addition, it may also play a role in other cellular processes such as apoptosis, cell growth, differentiation and gene regulation. Synthesizes preferentially dimers of 2'-5'-oligoadenylates (2-5A) from ATP which then bind to the inactive monomeric form of ribonuclease L (RNase L) leading to its dimerization and subsequent activation. Activation of RNase L leads to degradation of cellular as well as viral RNA, resulting in the inhibition of protein synthesis, thus terminating viral replication. Can mediate the antiviral effect via the classical RNase L-dependent pathway or an alternative antiviral pathway independent of RNase L. The polypeptide is 2'-5'-oligoadenylate synthase 3 (Oas3) (Mus musculus (Mouse)).